The chain runs to 701 residues: T-cell immunomodulatory protein homolog (701 aa).

Positions 1-29 (MVKCGKYVLILELLLLTLLYNLIKRVSNS) are cleaved as a signal peptide. Residues 30-657 (GETVSSFVDG…IQLSVNPSNK (628 aa)) lie on the Extracellular side of the membrane. Asn148, Asn180, Asn217, Asn258, Asn458, Asn522, and Asn571 each carry an N-linked (GlcNAc...) asparagine glycan. A helical membrane pass occupies residues 658–678 (FYSIIYITLICLSVIGVLIFI). Over 679 to 701 (LDRKEKIEDSKEEMGFKSHFVIG) the chain is Cytoplasmic.

This sequence belongs to the TIP family.

Its subcellular location is the membrane. Functionally, may protect the parasite against attack by the host immune system by immunomodulation. The chain is T-cell immunomodulatory protein homolog from Plasmodium yoelii yoelii.